Reading from the N-terminus, the 348-residue chain is Anthranilate phosphoribosyltransferase (348 aa).

Residues glycine 81, 84 to 85 (GD), 91 to 94 (NVST), 109 to 117 (KHGNRAVSG), and serine 121 contribute to the 5-phospho-alpha-D-ribose 1-diphosphate site. Glycine 81 provides a ligand contact to anthranilate. Serine 93 lines the Mg(2+) pocket. Residue asparagine 112 coordinates anthranilate. Arginine 167 contacts anthranilate. Residues aspartate 226 and glutamate 227 each coordinate Mg(2+).

It belongs to the anthranilate phosphoribosyltransferase family. As to quaternary structure, homodimer. Mg(2+) serves as cofactor.

The enzyme catalyses N-(5-phospho-beta-D-ribosyl)anthranilate + diphosphate = 5-phospho-alpha-D-ribose 1-diphosphate + anthranilate. It participates in amino-acid biosynthesis; L-tryptophan biosynthesis; L-tryptophan from chorismate: step 2/5. Its function is as follows. Catalyzes the transfer of the phosphoribosyl group of 5-phosphorylribose-1-pyrophosphate (PRPP) to anthranilate to yield N-(5'-phosphoribosyl)-anthranilate (PRA). The polypeptide is Anthranilate phosphoribosyltransferase (Azotobacter vinelandii (strain DJ / ATCC BAA-1303)).